Here is a 507-residue protein sequence, read N- to C-terminus: MFS-type transporter acdC (507 aa).

The interval 1 to 50 (MSPNAPAVDIGAAPSLDTPEGDTKQPAEDHVEKDSNLVDWDGPDDPEHPQ) is disordered. A compositionally biased stretch (basic and acidic residues) spans 21 to 36 (GDTKQPAEDHVEKDSN). The N-linked (GlcNAc...) asparagine glycan is linked to Asn51. The chain crosses the membrane as a helical span at residues 58–78 (WGITFSLASMTMWITFSSSVL). Residue Asn90 is glycosylated (N-linked (GlcNAc...) asparagine). A run of 5 helical transmembrane segments spans residues 95–115 (VMPLATTLVIFGFALGPLCWA), 125–145 (LPTFLGYGVFAIFQVPVAVAP), 155–175 (FFVGVFGSSALSVGPGVMADI), 186–206 (PFFFAANLLGPILGPIIGGFI), and 215–235 (WTAWLTLITSIFFGVLALLIV). Asn257 carries N-linked (GlcNAc...) asparagine glycosylation. 6 helical membrane passes run 290–310 (PILICFTVYLSLIYGILYLFL), 328–348 (IAGLPFLGILVGMVLGIGIII), 371–391 (LVEMMLTSITMPIGLFWFGWA), 395–415 (HWMVQTIAGVPLGIGLFVLFM), 442–462 (FLGGSFPLFATAMYHNLGVDW), and 466–486 (ILGFISVAMVPIPFAFYIFGA).

This sequence belongs to the major facilitator superfamily. CAR1 family.

The protein resides in the membrane. In terms of biological role, MFS-type transporter; part of the gene cluster that mediates the biosynthesis of aspcandine, a pyrrolobenzazepine alkaloid. The sequence is that of MFS-type transporter acdC from Aspergillus candidus.